A 63-amino-acid chain; its full sequence is Chromatin protein Cren7 (63 aa).

It belongs to the Cren7 family. Monomer. Methylated at multiple sites, to varying extents.

It localises to the chromosome. Its subcellular location is the cytoplasm. Its function is as follows. A chromatin protein, binds double-stranded DNA without sequence specificity. Constrains negative DNA supercoils. This chain is Chromatin protein Cren7, found in Pyrobaculum calidifontis (strain DSM 21063 / JCM 11548 / VA1).